A 160-amino-acid polypeptide reads, in one-letter code: Small ribosomal subunit protein uS10m (160 aa).

Belongs to the universal ribosomal protein uS10 family. As to quaternary structure, component of the mitochondrial ribosome small subunit (28S) which comprises a 12S rRNA and about 30 distinct proteins.

It localises to the mitochondrion. The chain is Small ribosomal subunit protein uS10m (Mrps10) from Mus musculus (Mouse).